The sequence spans 365 residues: 2-aminoethylphosphonate--pyruvate transaminase (365 aa).

Position 194 is an N6-(pyridoxal phosphate)lysine (Lys194).

This sequence belongs to the class-V pyridoxal-phosphate-dependent aminotransferase family. PhnW subfamily. As to quaternary structure, homodimer. It depends on pyridoxal 5'-phosphate as a cofactor.

The enzyme catalyses (2-aminoethyl)phosphonate + pyruvate = phosphonoacetaldehyde + L-alanine. Involved in phosphonate degradation. This Bacillus cereus (strain AH187) protein is 2-aminoethylphosphonate--pyruvate transaminase.